The chain runs to 212 residues: Acyl-homoserine-lactone synthase (212 aa).

Belongs to the autoinducer synthase family.

The catalysed reaction is a fatty acyl-[ACP] + S-adenosyl-L-methionine = an N-acyl-L-homoserine lactone + S-methyl-5'-thioadenosine + holo-[ACP] + H(+). Required for the synthesis of autoinducer molecules which bind to RaiR and that are involved in the restriction of nodule number. This chain is Acyl-homoserine-lactone synthase (raiI), found in Rhizobium etli.